Here is a 150-residue protein sequence, read N- to C-terminus: MMFFSSTFFVLLLFAILGLISKNMTLSISVVCLFFLSFIYPNLIFPWVEKYALKAGILILTIAVLAPIASGKINARDIFNSFTHWQSILGILIGVFVSWLGGRGVSLMSHQPSVVTGLLVGTILGVAFFKGVPVGPLIAAGLLSLALGKF.

Transmembrane regions (helical) follow at residues 1–21, 28–48, 51–71, 88–108, and 123–143; these read MMFF…GLIS, ISVV…FPWV, YALK…IASG, ILGI…VSLM, and ILGV…AGLL.

It belongs to the UPF0756 family.

It localises to the cell membrane. This Hamiltonella defensa subsp. Acyrthosiphon pisum (strain 5AT) protein is UPF0756 membrane protein HDEF_0364.